A 65-amino-acid polypeptide reads, in one-letter code: Large ribosomal subunit protein bL35 (65 aa).

It belongs to the bacterial ribosomal protein bL35 family.

In Paraburkholderia phytofirmans (strain DSM 17436 / LMG 22146 / PsJN) (Burkholderia phytofirmans), this protein is Large ribosomal subunit protein bL35.